Here is a 98-residue protein sequence, read N- to C-terminus: Large ribosomal subunit protein bL21 (98 aa).

The protein belongs to the bacterial ribosomal protein bL21 family. As to quaternary structure, part of the 50S ribosomal subunit. Contacts protein L20.

Functionally, this protein binds to 23S rRNA in the presence of protein L20. The sequence is that of Large ribosomal subunit protein bL21 from Aquifex aeolicus (strain VF5).